We begin with the raw amino-acid sequence, 388 residues long: MNLHEYQGKQLFAEYGLPVSKGFAVDTPEEAAEACDKIGGGEWVVKAQVHAGGRGKAGGVKLVKSKEDAKAFAQQWLGKNLVTYQTDANGQPVSKILVESCTDIDKELYLGAVVDRSSRRIVFMASTEGGVDIEKVAHDTPEKILKATIDPLVGAQPYQGRELAFQLGLKGDQIKQFTHIFVGLAKLFQDYDLALLEVNPLVIKKDGNLHCLDAKINIDSNALYRQPKLRAMHDPSQDDAREAHAQKWELNYVALEGNIGCMVNGAGLAMGTMDIVNLHGGKPANFLDVGGGATKERVTEAFKIILSDSNVKAVLVNIFGGIVRCDMIAEGIIGAVKEVGVKVPVVVRLEGNNAELGAKVLAESGLNIIAATSLTDAAQQVVKAAEGK.

The region spanning 9–244 is the ATP-grasp domain; sequence KQLFAEYGLP…PSQDDAREAH (236 aa). Residues Lys46, 53 to 55, Glu99, Thr102, and Glu107 each bind ATP; that span reads GRG. Positions 199 and 213 each coordinate Mg(2+). Residues Asn264 and 321 to 323 contribute to the substrate site; that span reads GIV.

Belongs to the succinate/malate CoA ligase beta subunit family. Heterotetramer of two alpha and two beta subunits. Mg(2+) is required as a cofactor.

It catalyses the reaction succinate + ATP + CoA = succinyl-CoA + ADP + phosphate. The enzyme catalyses GTP + succinate + CoA = succinyl-CoA + GDP + phosphate. Its pathway is carbohydrate metabolism; tricarboxylic acid cycle; succinate from succinyl-CoA (ligase route): step 1/1. Functionally, succinyl-CoA synthetase functions in the citric acid cycle (TCA), coupling the hydrolysis of succinyl-CoA to the synthesis of either ATP or GTP and thus represents the only step of substrate-level phosphorylation in the TCA. The beta subunit provides nucleotide specificity of the enzyme and binds the substrate succinate, while the binding sites for coenzyme A and phosphate are found in the alpha subunit. This is Succinate--CoA ligase [ADP-forming] subunit beta from Pseudomonas paraeruginosa (strain DSM 24068 / PA7) (Pseudomonas aeruginosa (strain PA7)).